We begin with the raw amino-acid sequence, 188 residues long: PRA1 family protein F4 (188 aa).

The segment covering 1–13 has biased composition (polar residues); the sequence is MANNDEITTSSHA. The segment at 1–25 is disordered; it reads MANNDEITTSSHASPAVNHESISRA. 4 helical membrane-spanning segments follow: residues 67 to 86, 90 to 107, 119 to 139, and 142 to 162; these read YFRS…SLIW, SLIV…LYFL, IDDR…LLLT, and TFNI…HAVI.

Belongs to the PRA1 family.

The protein resides in the endosome membrane. Its function is as follows. May be involved in both secretory and endocytic intracellular trafficking in the endosomal/prevacuolar compartments. The chain is PRA1 family protein F4 (PRA1F4) from Arabidopsis thaliana (Mouse-ear cress).